The sequence spans 450 residues: Protein DA1-related 3 (450 aa).

A coiled-coil region spans residues Met-1–Gln-46. Basic and acidic residues-rich tracts occupy residues Lys-27 to Val-47 and Thr-56 to Val-69. A disordered region spans residues Lys-27–Gly-87.

The polypeptide is Protein DA1-related 3 (DAR3) (Arabidopsis thaliana (Mouse-ear cress)).